Here is a 488-residue protein sequence, read N- to C-terminus: Ribulose bisphosphate carboxylase large chain (488 aa).

Residues asparagine 127 and threonine 177 each contribute to the substrate site. Lysine 179 acts as the Proton acceptor in catalysis. Lysine 181 provides a ligand contact to substrate. Mg(2+) is bound by residues lysine 205, aspartate 207, and glutamate 208. At lysine 205 the chain carries N6-carboxylysine. Catalysis depends on histidine 297, which acts as the Proton acceptor. Arginine 298, histidine 330, and serine 382 together coordinate substrate.

It belongs to the RuBisCO large chain family. Type I subfamily. As to quaternary structure, heterohexadecamer of 8 large chains and 8 small chains. It depends on Mg(2+) as a cofactor.

The protein resides in the plastid. It localises to the chloroplast. It catalyses the reaction 2 (2R)-3-phosphoglycerate + 2 H(+) = D-ribulose 1,5-bisphosphate + CO2 + H2O. The catalysed reaction is D-ribulose 1,5-bisphosphate + O2 = 2-phosphoglycolate + (2R)-3-phosphoglycerate + 2 H(+). In terms of biological role, ruBisCO catalyzes two reactions: the carboxylation of D-ribulose 1,5-bisphosphate, the primary event in carbon dioxide fixation, as well as the oxidative fragmentation of the pentose substrate in the photorespiration process. Both reactions occur simultaneously and in competition at the same active site. This is Ribulose bisphosphate carboxylase large chain from Rhodomonas salina (Cryptomonas salina).